We begin with the raw amino-acid sequence, 152 residues long: Nucleoside diphosphate kinase A (152 aa).

ATP-binding residues include Lys-12, Phe-60, Arg-88, and Thr-94. Lys-100 participates in a covalent cross-link: Glycyl lysine isopeptide (Lys-Gly) (interchain with G-Cter in ubiquitin). ATP contacts are provided by Arg-105 and Asn-115. The Pros-phosphohistidine intermediate role is filled by His-118. Ser-120, Ser-122, and Ser-125 each carry phosphoserine.

The protein belongs to the NDK family. In terms of assembly, hexamer of two different chains: An and B (A6, A5B, A4B2, A3B3, A2B4, AB5, B6). Interacts with PRUNE1. Component of the SET complex, composed of at least ANP32A, APEX1, HMGB2, NME1, SET and TREX1. Within this complex, interacts directly with SET. Also interacts with TREX1, but only following translocation to the nucleus. Mg(2+) is required as a cofactor.

It localises to the cytoplasm. The protein localises to the nucleus. The catalysed reaction is a 2'-deoxyribonucleoside 5'-diphosphate + ATP = a 2'-deoxyribonucleoside 5'-triphosphate + ADP. It carries out the reaction a ribonucleoside 5'-diphosphate + ATP = a ribonucleoside 5'-triphosphate + ADP. Its activity is regulated as follows. Autophosphorylation at His-118 increases serine/threonine protein kinase activity of the enzyme. Interaction with the SET complex inhibits exonuclease activity. Its function is as follows. Major role in the synthesis of nucleoside triphosphates other than ATP. The ATP gamma phosphate is transferred to the NDP beta phosphate via a ping-pong mechanism, using a phosphorylated active-site intermediate. Possesses nucleoside-diphosphate kinase, serine/threonine-specific protein kinase, geranyl and farnesyl pyrophosphate kinase, histidine protein kinase and 3'-5' exonuclease activities. Involved in cell proliferation, differentiation and development, signal transduction, G protein-coupled receptor endocytosis, and gene expression. Required for neural development including neural patterning and cell fate determination. During GZMA-mediated cell death, works in concert with TREX1. NME1 nicks one strand of DNA and TREX1 removes bases from the free 3' end to enhance DNA damage and prevent DNA end reannealing and rapid repair. In Canis lupus familiaris (Dog), this protein is Nucleoside diphosphate kinase A (NME1).